A 612-amino-acid polypeptide reads, in one-letter code: MEIKRKKIRESALFPREDDCLIQEKLDFEIRMRDGICKLLSVSSQKEQLLNAVKNLMVCNARIQNYTAQLRSQMGESNTGNTGRRSSDVGLNERQACPGKVAISGIRIPLMWKDSDHFSNKEKTQRHSVFCMLRLGPEIHDTDMVIVDKTMTDICFDNVTVFADARSDFQLKLELYSCCMEDSSIANTPKKLARKLRNSIGKSAGKKFNSELEATEPEAFLFSTPHMPGARYSLLAQITFTLDSIEDNFRTHSLTITGHEDSSFWLPLYGSMCCRLVAQPACLTDEAMMGFLNQQEMVGGLRSYTKFYCVLKGGNLLCYYTPEEINAKVEPALTVPINKETRIRAVGKDSKSRASSFSVINVVSGEAVTKVFSADCKEELQKWMEAFWQHFYDLSQWKHCSEKLMKINETSPQKPPLFLTREPASVYHDMSIGSPMKLESITDIIHNKIEETDGQFLIGPQEESAPAPWAALFDGNHQLHVERNKPPLLSSDDPSTSSNVKAKKRRAPPPPPNKTPFSKLVEGNDPSDKENIWSRASLVRKSFDTKLSAIMHQLQRPMVVPLTPAPPEKIEVTENKAELDTGTQEPIKPVPTPRQKSLREKLDPRVWLQSQV.

The REM-1 domain maps to 3–79; the sequence is IKRKKIRESA…LRSQMGESNT (77 aa). The PH domain occupies 285 to 392; that stretch reads DEAMMGFLNQ…WMEAFWQHFY (108 aa). Disordered regions lie at residues 483–530 and 574–612; these read RNKP…SDKE and ENKA…QSQV. A compositionally biased stretch (low complexity) spans 486 to 498; it reads PPLLSSDDPSTSS.

The polypeptide is Rhotekin-2 (rtkn2) (Xenopus laevis (African clawed frog)).